The following is a 261-amino-acid chain: Cytochrome c oxidase subunit 3 (261 aa).

Residues 1-15 (MTHQTHAYHMVNPSP) lie on the Mitochondrial matrix side of the membrane. Residues 16 to 34 (WPLTGALSALLMTSGLIMW) form a helical membrane-spanning segment. The Mitochondrial intermembrane portion of the chain corresponds to 35 to 40 (FHFNST). A helical transmembrane segment spans residues 41–66 (ILLMLGLTTNMLTMYQWWRDVIREST). Topologically, residues 67–72 (FQGHHT) are mitochondrial matrix. The helical transmembrane segment at 73-105 (PNVQKGLRYGMILFIISEVLFFTGFFWAFYHSS) threads the bilayer. The Mitochondrial intermembrane portion of the chain corresponds to 106 to 128 (LAPTPELGGCWPPTGIHPLNPLE). The chain crosses the membrane as a helical span at residues 129-152 (VPLLNTSVLLASGVSITWAHHSLM). Over 153–155 (EGN) the chain is Mitochondrial matrix. The chain crosses the membrane as a helical span at residues 156 to 183 (RNHMLQALFITIALGVYFTLLQASEYYE). Residues 184-190 (APFTISD) lie on the Mitochondrial intermembrane side of the membrane. A helical transmembrane segment spans residues 191 to 223 (GVYGSTFFVATGFHGLHVIIGSTFLIVCFFRQL). Residues 224–232 (KFHFTSNHH) lie on the Mitochondrial matrix side of the membrane. A helical transmembrane segment spans residues 233-256 (FGFEAAAWYWHFVDVVWLFLYVSI). Topologically, residues 257-261 (YWWGS) are mitochondrial intermembrane.

It belongs to the cytochrome c oxidase subunit 3 family. Component of the cytochrome c oxidase (complex IV, CIV), a multisubunit enzyme composed of 14 subunits. The complex is composed of a catalytic core of 3 subunits MT-CO1, MT-CO2 and MT-CO3, encoded in the mitochondrial DNA, and 11 supernumerary subunits COX4I, COX5A, COX5B, COX6A, COX6B, COX6C, COX7A, COX7B, COX7C, COX8 and NDUFA4, which are encoded in the nuclear genome. The complex exists as a monomer or a dimer and forms supercomplexes (SCs) in the inner mitochondrial membrane with NADH-ubiquinone oxidoreductase (complex I, CI) and ubiquinol-cytochrome c oxidoreductase (cytochrome b-c1 complex, complex III, CIII), resulting in different assemblies (supercomplex SCI(1)III(2)IV(1) and megacomplex MCI(2)III(2)IV(2)).

The protein localises to the mitochondrion inner membrane. It carries out the reaction 4 Fe(II)-[cytochrome c] + O2 + 8 H(+)(in) = 4 Fe(III)-[cytochrome c] + 2 H2O + 4 H(+)(out). Its function is as follows. Component of the cytochrome c oxidase, the last enzyme in the mitochondrial electron transport chain which drives oxidative phosphorylation. The respiratory chain contains 3 multisubunit complexes succinate dehydrogenase (complex II, CII), ubiquinol-cytochrome c oxidoreductase (cytochrome b-c1 complex, complex III, CIII) and cytochrome c oxidase (complex IV, CIV), that cooperate to transfer electrons derived from NADH and succinate to molecular oxygen, creating an electrochemical gradient over the inner membrane that drives transmembrane transport and the ATP synthase. Cytochrome c oxidase is the component of the respiratory chain that catalyzes the reduction of oxygen to water. Electrons originating from reduced cytochrome c in the intermembrane space (IMS) are transferred via the dinuclear copper A center (CU(A)) of subunit 2 and heme A of subunit 1 to the active site in subunit 1, a binuclear center (BNC) formed by heme A3 and copper B (CU(B)). The BNC reduces molecular oxygen to 2 water molecules using 4 electrons from cytochrome c in the IMS and 4 protons from the mitochondrial matrix. The sequence is that of Cytochrome c oxidase subunit 3 (MT-CO3) from Eudorcas thomsonii (Thomson's gazelle).